Consider the following 189-residue polypeptide: Elongation factor P (189 aa).

Residue K34 is modified to N6-(3,6-diaminohexanoyl)-5-hydroxylysine.

This sequence belongs to the elongation factor P family. Post-translationally, may be beta-lysylated on the epsilon-amino group of Lys-34 by the combined action of EpmA and EpmB, and then hydroxylated on the C5 position of the same residue by EpmC (if this protein is present). Lysylation is critical for the stimulatory effect of EF-P on peptide-bond formation. The lysylation moiety may extend toward the peptidyltransferase center and stabilize the terminal 3-CCA end of the tRNA. Hydroxylation of the C5 position on Lys-34 may allow additional potential stabilizing hydrogen-bond interactions with the P-tRNA.

The protein resides in the cytoplasm. The protein operates within protein biosynthesis; polypeptide chain elongation. Involved in peptide bond synthesis. Alleviates ribosome stalling that occurs when 3 or more consecutive Pro residues or the sequence PPG is present in a protein, possibly by augmenting the peptidyl transferase activity of the ribosome. Modification of Lys-34 is required for alleviation. This Teredinibacter turnerae (strain ATCC 39867 / T7901) protein is Elongation factor P.